Here is a 253-residue protein sequence, read N- to C-terminus: Triosephosphate isomerase (253 aa).

8-10 is a substrate binding site; that stretch reads NWK. H93 functions as the Electrophile in the catalytic mechanism. E165 functions as the Proton acceptor in the catalytic mechanism. Substrate is bound by residues G171, S210, and 231–232; that span reads GG.

The protein belongs to the triosephosphate isomerase family. In terms of assembly, homodimer.

It is found in the cytoplasm. The catalysed reaction is D-glyceraldehyde 3-phosphate = dihydroxyacetone phosphate. Its pathway is carbohydrate biosynthesis; gluconeogenesis. It participates in carbohydrate degradation; glycolysis; D-glyceraldehyde 3-phosphate from glycerone phosphate: step 1/1. Its function is as follows. Involved in the gluconeogenesis. Catalyzes stereospecifically the conversion of dihydroxyacetone phosphate (DHAP) to D-glyceraldehyde-3-phosphate (G3P). This chain is Triosephosphate isomerase, found in Francisella tularensis subsp. holarctica (strain FTNF002-00 / FTA).